Here is a 438-residue protein sequence, read N- to C-terminus: Thymidine phosphorylase (438 aa).

It belongs to the thymidine/pyrimidine-nucleoside phosphorylase family. In terms of assembly, homodimer.

It catalyses the reaction thymidine + phosphate = 2-deoxy-alpha-D-ribose 1-phosphate + thymine. Its pathway is pyrimidine metabolism; dTMP biosynthesis via salvage pathway; dTMP from thymine: step 1/2. Functionally, the enzymes which catalyze the reversible phosphorolysis of pyrimidine nucleosides are involved in the degradation of these compounds and in their utilization as carbon and energy sources, or in the rescue of pyrimidine bases for nucleotide synthesis. The polypeptide is Thymidine phosphorylase (Burkholderia orbicola (strain AU 1054)).